The primary structure comprises 453 residues: Ribose 1,5-bisphosphate phosphokinase PhnN (453 aa).

The tract at residues 1–21 (MHGSTGFVQGTRPAGDQADPL) is disordered. Residues 1–271 (MHGSTGFVQG…SGQGERASLP (271 aa)) form a unknown region. The interval 272-453 (HSGRIFFCVG…KLLDILRQAK (182 aa)) is ribose 1,5-bisphosphokinase.

In the C-terminal section; belongs to the ribose 1,5-bisphosphokinase family.

It catalyses the reaction alpha-D-ribose 1,5-bisphosphate + ATP = 5-phospho-alpha-D-ribose 1-diphosphate + ADP. It participates in metabolic intermediate biosynthesis; 5-phospho-alpha-D-ribose 1-diphosphate biosynthesis; 5-phospho-alpha-D-ribose 1-diphosphate from D-ribose 5-phosphate (route II): step 3/3. Its function is as follows. Catalyzes the phosphorylation of ribose 1,5-bisphosphate to 5-phospho-D-ribosyl alpha-1-diphosphate (PRPP). The protein is Ribose 1,5-bisphosphate phosphokinase PhnN (phnN) of Janthinobacterium sp. (strain Marseille) (Minibacterium massiliensis).